The primary structure comprises 308 residues: Ribosomal RNA small subunit methyltransferase H (308 aa).

S-adenosyl-L-methionine is bound by residues 32-34 (AGH), Asp51, Phe78, Asp99, and Gln106.

This sequence belongs to the methyltransferase superfamily. RsmH family.

The protein resides in the cytoplasm. The enzyme catalyses cytidine(1402) in 16S rRNA + S-adenosyl-L-methionine = N(4)-methylcytidine(1402) in 16S rRNA + S-adenosyl-L-homocysteine + H(+). Specifically methylates the N4 position of cytidine in position 1402 (C1402) of 16S rRNA. This is Ribosomal RNA small subunit methyltransferase H from Mesoplasma florum (strain ATCC 33453 / NBRC 100688 / NCTC 11704 / L1) (Acholeplasma florum).